Reading from the N-terminus, the 1291-residue chain is Vacuolating cytotoxin autotransporter (1291 aa).

An N-terminal signal peptide occupies residues 1-33; sequence MEIQQTHRKINRPLVSLALVGALVSITPQQSHA. The interval 326–374 is disordered; that stretch reads PPEGGYKDKPNDKPSNTTQNNAKNDKQESSQNNSNTQVINPPNSAQKTE. Polar residues-rich tracts occupy residues 338-347 and 354-374; these read KPSNTTQNNA and SSQN…QKTE. Residues 1018–1291 form the Autotransporter domain; sequence KYEKPTNVWA…ASNLGMRYSF (274 aa).

The protein resides in the periplasm. It is found in the secreted. The protein localises to the cell surface. It localises to the cell outer membrane. Induces vacuolation of eukaryotic cells. Causes ulceration and gastric lesions. This chain is Vacuolating cytotoxin autotransporter (vacA), found in Helicobacter pylori (Campylobacter pylori).